A 212-amino-acid chain; its full sequence is Ribonuclease HII (212 aa).

One can recognise an RNase H type-2 domain in the interval 1-206 (MICGVDEAGK…VKNLLHQKNQ (206 aa)). Residues Asp-6, Glu-7, and Asp-101 each contribute to the a divalent metal cation site.

Belongs to the RNase HII family. The cofactor is Mn(2+). Requires Mg(2+) as cofactor.

It localises to the cytoplasm. It catalyses the reaction Endonucleolytic cleavage to 5'-phosphomonoester.. In terms of biological role, endonuclease that specifically degrades the RNA of RNA-DNA hybrids. This is Ribonuclease HII from Methanospirillum hungatei JF-1 (strain ATCC 27890 / DSM 864 / NBRC 100397 / JF-1).